The sequence spans 2372 residues: NBAS subunit of NRZ tethering complex (2372 aa).

2 WD repeats span residues 119–158 and 304–343; these read DPNPHWRRVAWSHDCALLAYADSTGTVRVFDLMGSELFII and GEQDGVFRMSLSPDGTILAVIHFSGSLSLWDIPSFKLRGS. The segment at 447 to 468 is disordered; sequence LESSVKGEEDDGDDDSDSDEEA. Positions 454 to 467 are enriched in acidic residues; sequence EEDDGDDDSDSDEE. A coiled-coil region spans residues 629–668; the sequence is YEDFLSMEEELEQRKERESKKRQELLKKVDFSKLTLEQKE.

It is found in the endoplasmic reticulum. Its function is as follows. Involved in Golgi-to-endoplasmic reticulum (ER) retrograde transport; the function is proposed to depend on its association in the NRZ complex which is believed to play a role in SNARE assembly at the ER. Required for normal embryonic development. May play a role in the nonsense-mediated decay pathway of mRNAs containing premature stop codons. This Danio rerio (Zebrafish) protein is NBAS subunit of NRZ tethering complex.